The following is a 405-amino-acid chain: MSAQPISDFYAYPDAAGHFGQFGGRFVAETLIGPLQELSAAYDQARQDPSFIAEYDKDLKHYVGRPSPIYHAERLSREVGGAQILLKREDLNHTGAHKINNTIGQALLASRMGKTRIIAETGAGQHGVASATVAARLGLECVVYMGATDIERQKINVYRMKLLGATVIPVTSGSATLKDALNEAMRDWVTNVRDTFYIIGTVAGPDPYPRMVRDFNAIVGREAREQMLQDYGRLPDAISACVGGGSNAIGLFHAFLNDPGVKIYGAEAAGDGIATGRHAASIAAGRPGVLHGNRTYVICDDDGQITETHSISAGLDYPGVGPEHSFLSDSGRAVYQGITDDEAMAAFHLLAHTEGILAALESSHAVAQSIKLARELPRDALVLCNLSGRGDKDVHTIAAREGIAL.

Lys-98 is subject to N6-(pyridoxal phosphate)lysine.

It belongs to the TrpB family. In terms of assembly, tetramer of two alpha and two beta chains. The cofactor is pyridoxal 5'-phosphate.

The enzyme catalyses (1S,2R)-1-C-(indol-3-yl)glycerol 3-phosphate + L-serine = D-glyceraldehyde 3-phosphate + L-tryptophan + H2O. The protein operates within amino-acid biosynthesis; L-tryptophan biosynthesis; L-tryptophan from chorismate: step 5/5. The beta subunit is responsible for the synthesis of L-tryptophan from indole and L-serine. This is Tryptophan synthase beta chain from Xanthomonas axonopodis pv. citri (strain 306).